Reading from the N-terminus, the 355-residue chain is MAPVTETGIGLLCLCRQGFEPELAGELQFRASEAGFAGYARTQRNDGYVLFMCDEAAALAPRLRWRELIFARQKLVVLAELPQLDPADRITPMLEVLADAPRFGDLWVEHPDSDAGKPLSGLARAFGNALRPALRKAGKLTDKPNNRLPRLHVVFVDGTHAFVCVADPADSAPWALGIPRLKLLPEAPSRSALKLDEALLTLLTPEEREALAKPGMRAADLGAAPGGWTWVLTRQHMHVLSIDNGPLRQHVLDTGLVEHLRADGFHWHPEQPLDWMVCDMVEQPRRVAERMATWFREGWCRHAIFNLKLPMKKRWDETRLCLDLFQEQAGKPLVVRAKQLYHDREEITVLASPLR.

Residues Ser191, 224–227 (APGG), Asp243, Asp263, and Asp279 contribute to the S-adenosyl-L-methionine site. Lys308 (proton acceptor) is an active-site residue.

Belongs to the class I-like SAM-binding methyltransferase superfamily. RNA methyltransferase RlmE family. RlmM subfamily. In terms of assembly, monomer.

Its subcellular location is the cytoplasm. The enzyme catalyses cytidine(2498) in 23S rRNA + S-adenosyl-L-methionine = 2'-O-methylcytidine(2498) in 23S rRNA + S-adenosyl-L-homocysteine + H(+). Functionally, catalyzes the 2'-O-methylation at nucleotide C2498 in 23S rRNA. The chain is Ribosomal RNA large subunit methyltransferase M from Stenotrophomonas maltophilia (strain R551-3).